The following is an 851-amino-acid chain: Alanine--tRNA ligase (851 aa).

Positions 554, 558, 656, and 660 each coordinate Zn(2+).

It belongs to the class-II aminoacyl-tRNA synthetase family. It depends on Zn(2+) as a cofactor.

Its subcellular location is the cytoplasm. The catalysed reaction is tRNA(Ala) + L-alanine + ATP = L-alanyl-tRNA(Ala) + AMP + diphosphate. In terms of biological role, catalyzes the attachment of alanine to tRNA(Ala) in a two-step reaction: alanine is first activated by ATP to form Ala-AMP and then transferred to the acceptor end of tRNA(Ala). Also edits incorrectly charged Ser-tRNA(Ala) and Gly-tRNA(Ala) via its editing domain. The polypeptide is Alanine--tRNA ligase (Aliarcobacter butzleri (strain RM4018) (Arcobacter butzleri)).